Reading from the N-terminus, the 886-residue chain is Alanine--tRNA ligase (886 aa).

Zn(2+) contacts are provided by His-564, His-568, Cys-676, and His-680.

Belongs to the class-II aminoacyl-tRNA synthetase family. It depends on Zn(2+) as a cofactor.

The protein localises to the cytoplasm. It catalyses the reaction tRNA(Ala) + L-alanine + ATP = L-alanyl-tRNA(Ala) + AMP + diphosphate. Functionally, catalyzes the attachment of alanine to tRNA(Ala) in a two-step reaction: alanine is first activated by ATP to form Ala-AMP and then transferred to the acceptor end of tRNA(Ala). Also edits incorrectly charged Ser-tRNA(Ala) and Gly-tRNA(Ala) via its editing domain. This chain is Alanine--tRNA ligase, found in Bartonella bacilliformis.